Here is a 324-residue protein sequence, read N- to C-terminus: Bis(5'-nucleosyl)-tetraphosphatase, symmetrical (324 aa).

A disordered region spans residues 269 to 324 (PGREVTAPATAPRAPRRPRERQGRQRARGGRGGGNGNGNGGNAAAPAAAPGDAPQE). Basic residues predominate over residues 282–297 (APRRPRERQGRQRARG). Gly residues predominate over residues 298–309 (GRGGGNGNGNGG). The span at 310–324 (NAAAPAAAPGDAPQE) shows a compositional bias: low complexity.

It belongs to the Ap4A hydrolase family.

The catalysed reaction is P(1),P(4)-bis(5'-adenosyl) tetraphosphate + H2O = 2 ADP + 2 H(+). Functionally, hydrolyzes diadenosine 5',5'''-P1,P4-tetraphosphate to yield ADP. This Xanthomonas campestris pv. campestris (strain ATCC 33913 / DSM 3586 / NCPPB 528 / LMG 568 / P 25) protein is Bis(5'-nucleosyl)-tetraphosphatase, symmetrical.